A 297-amino-acid chain; its full sequence is MANQLKVGIIGAGAMGLLYAANFANISELTLFTRRKEQSDLLNQKGLSLKDNSELKNIHIQATVITDAEKLSEQELLIIAVKQYSLKTILPLLRSIPERVPLLFIQNGAAHLDSMPLLGNKRTILLGISEHGAGREDDTTVIWRGHGRTKYSIYQGELNEAVIKILDSNPDFPVEKHASYLDIINEKLFINAVINPLTAVLQVQNGKLLENKEWHELLKTIVKEIQTVLPVENALEKVEVICQVTATNFSSMALDRMNNRMTEIDGIVLPILEKGESLPTLHALYHLIKGLEGESDV.

NADP(+) contacts are provided by residues 11–16, asparagine 107, and alanine 133; that span reads GAGAMG. Position 107 (asparagine 107) interacts with substrate. The Proton donor role is filled by lysine 187. Substrate-binding residues include asparagine 191, asparagine 195, asparagine 205, and serine 251. Glutamate 263 contributes to the NADP(+) binding site.

Belongs to the ketopantoate reductase family.

The protein resides in the cytoplasm. The enzyme catalyses (R)-pantoate + NADP(+) = 2-dehydropantoate + NADPH + H(+). It functions in the pathway cofactor biosynthesis; (R)-pantothenate biosynthesis; (R)-pantoate from 3-methyl-2-oxobutanoate: step 2/2. Functionally, catalyzes the NADPH-dependent reduction of ketopantoate into pantoic acid. This chain is 2-dehydropantoate 2-reductase, found in Listeria monocytogenes serovar 1/2a (strain ATCC BAA-679 / EGD-e).